A 206-amino-acid chain; its full sequence is MLGLIGKKVGMTQIFQKNGIVVPVTVIEFQPNYIIGKKTVDRDGYSALIAGSVDLKSSKVSKPIKGQYKSLKDIEPKRYVIELKGLDGYDAGDEIKVDVFKSVKYVDVTGTTKGKGFQGAMKRHNFSGGPSSHGSKFHRHLGGTGQATTPARTFKGTKMAGRMAGNQQTIQNLEVVLIDEEKRALLVKGAVPGAKGSFVVVKKSKK.

The disordered stretch occupies residues 127-151 (SGGPSSHGSKFHRHLGGTGQATTPA).

It belongs to the universal ribosomal protein uL3 family. In terms of assembly, part of the 50S ribosomal subunit. Forms a cluster with proteins L14 and L19.

Its function is as follows. One of the primary rRNA binding proteins, it binds directly near the 3'-end of the 23S rRNA, where it nucleates assembly of the 50S subunit. The chain is Large ribosomal subunit protein uL3 from Borreliella burgdorferi (strain ATCC 35210 / DSM 4680 / CIP 102532 / B31) (Borrelia burgdorferi).